The chain runs to 118 residues: Small ribosomal subunit protein uS13 (118 aa).

Residues 94–118 (GLPVRGQRTKTNARTRKGPRKPIKK) form a disordered region.

The protein belongs to the universal ribosomal protein uS13 family. As to quaternary structure, part of the 30S ribosomal subunit. Forms a loose heterodimer with protein S19. Forms two bridges to the 50S subunit in the 70S ribosome.

In terms of biological role, located at the top of the head of the 30S subunit, it contacts several helices of the 16S rRNA. In the 70S ribosome it contacts the 23S rRNA (bridge B1a) and protein L5 of the 50S subunit (bridge B1b), connecting the 2 subunits; these bridges are implicated in subunit movement. Contacts the tRNAs in the A and P-sites. This Shigella dysenteriae serotype 1 (strain Sd197) protein is Small ribosomal subunit protein uS13.